The chain runs to 65 residues: Large ribosomal subunit protein bL35 (65 aa).

This sequence belongs to the bacterial ribosomal protein bL35 family.

The sequence is that of Large ribosomal subunit protein bL35 from Acaryochloris marina (strain MBIC 11017).